The sequence spans 116 residues: Large ribosomal subunit protein bL17 (116 aa).

Belongs to the bacterial ribosomal protein bL17 family. In terms of assembly, part of the 50S ribosomal subunit. Contacts protein L32.

The protein is Large ribosomal subunit protein bL17 of Synechococcus sp. (strain CC9902).